An 86-amino-acid polypeptide reads, in one-letter code: Small ribosomal subunit protein uS17 (86 aa).

This sequence belongs to the universal ribosomal protein uS17 family. Part of the 30S ribosomal subunit.

Functionally, one of the primary rRNA binding proteins, it binds specifically to the 5'-end of 16S ribosomal RNA. This chain is Small ribosomal subunit protein uS17, found in Roseiflexus castenholzii (strain DSM 13941 / HLO8).